We begin with the raw amino-acid sequence, 233 residues long: MAKLTKRMRVIREKVDGTKSYDINEAVALLKELATAKFVESVDVAVNLGIDPRKSDQNVRGATVLPHGTGRDVRVAVFTQGANAEAAKAAGAELVGMDDLAEKIKAGEMNFDVVIASPDAMRVVGMLGQILGPRGLMPNPKTGTVTPNVAEAVKNAKAGQVRYRNDKNGIIHTTIGKVDFTPVQLKENLEALVSALKKAKPAVAKGIFVKKISISTTMGAGVAVDQATLETTV.

The protein belongs to the universal ribosomal protein uL1 family. Part of the 50S ribosomal subunit.

Binds directly to 23S rRNA. The L1 stalk is quite mobile in the ribosome, and is involved in E site tRNA release. Functionally, protein L1 is also a translational repressor protein, it controls the translation of the L11 operon by binding to its mRNA. The chain is Large ribosomal subunit protein uL1 from Shewanella baltica (strain OS185).